The primary structure comprises 372 residues: Cytochrome b (372 aa).

The next 4 membrane-spanning stretches (helical) occupy residues 25–45, 69–90, 105–125, and 170–190; these read FGSM…FLAI, WIMQ…YIHI, WLSG…GYVL, and FFAL…IHIM. 2 residues coordinate heme b: His-75 and His-89. Residues His-174 and His-188 each contribute to the heme b site. Residue His-193 coordinates a ubiquinone. The next 4 membrane-spanning stretches (helical) occupy residues 218 to 238, 280 to 300, 312 to 332, and 339 to 358; these read HKDI…MTLT, LGGT…PFTH, LTQL…WAAT, and FTMI…IMNP.

The protein belongs to the cytochrome b family. The cytochrome bc1 complex contains 3 respiratory subunits (MT-CYB, CYC1 and UQCRFS1), 2 core proteins (UQCRC1 and UQCRC2) and probably 6 low-molecular weight proteins. The cofactor is heme b.

It is found in the mitochondrion inner membrane. Component of the ubiquinol-cytochrome c reductase complex (complex III or cytochrome b-c1 complex) that is part of the mitochondrial respiratory chain. The b-c1 complex mediates electron transfer from ubiquinol to cytochrome c. Contributes to the generation of a proton gradient across the mitochondrial membrane that is then used for ATP synthesis. This Lycodon semicarinatus (Ryukyu odd-tooth snake) protein is Cytochrome b (MT-CYB).